The sequence spans 558 residues: Transcription factor RelB (558 aa).

Residues 1–11 (MPSRRAARESA) show a composition bias toward basic and acidic residues. The disordered stretch occupies residues 1–21 (MPSRRAARESAPELGALGSSD). Ser19 carries the phosphoserine modification. A leucine-zipper region spans residues 22-50 (LSSLSLTVSRTTDELEIIDEYIKENGFGL). The residue at position 84 (Thr84) is a Phosphothreonine. The RHD domain occupies 103–418 (PYLVITEQPK…ESKRRKKKPV (316 aa)). Short sequence motifs (nuclear localization signal) lie at residues 387–391 (KKRKR) and 411–416 (KRRKKK). A Phosphoserine modification is found at Ser552.

Component of the NF-kappa-B RelB-p50 complex. Component of the NF-kappa-B RelB-p52 complex. Self-associates; the interaction seems to be transient and may prevent degradation allowing for heterodimer formation p50 or p52. Interacts with NFKB1/p50, NFKB2/p52 and NFKB2/p100. Interacts with NFKBID. Interacts with BMAL1 and the interaction is enhanced in the presence of CLOCK. Post-translationally, phosphorylation at 'Thr-103' and 'Ser-573' is followed by proteasomal degradation. Expressed in intestine, thymus and spleen. Undetectable in liver, bome marrow, kidney and testis.

It localises to the nucleus. The protein resides in the cytoplasm. It is found in the cytoskeleton. The protein localises to the microtubule organizing center. Its subcellular location is the centrosome. Functionally, NF-kappa-B is a pleiotropic transcription factor which is present in almost all cell types and is involved in many biological processed such as inflammation, immunity, differentiation, cell growth, tumorigenesis and apoptosis. NF-kappa-B is a homo- or heterodimeric complex formed by the Rel-like domain-containing proteins RELA/p65, RELB, NFKB1/p105, NFKB1/p50, REL and NFKB2/p52. The dimers bind at kappa-B sites in the DNA of their target genes and the individual dimers have distinct preferences for different kappa-B sites that they can bind with distinguishable affinity and specificity. Different dimer combinations act as transcriptional activators or repressors, respectively. NF-kappa-B is controlled by various mechanisms of post-translational modification and subcellular compartmentalization as well as by interactions with other cofactors or corepressors. NF-kappa-B complexes are held in the cytoplasm in an inactive state complexed with members of the NF-kappa-B inhibitor (I-kappa-B) family. In a conventional activation pathway, I-kappa-B is phosphorylated by I-kappa-B kinases (IKKs) in response to different activators, subsequently degraded thus liberating the active NF-kappa-B complex which translocates to the nucleus. NF-kappa-B heterodimeric RelB-p50 and RelB-p52 complexes are transcriptional activators. RELB neither associates with DNA nor with RELA/p65 or REL. Stimulates promoter activity in the presence of NFKB2/p49. As a member of the NUPR1/RELB/IER3 survival pathway, may allow the development of pancreatic intraepithelial neoplasias. Regulates the circadian clock by repressing the transcriptional activator activity of the CLOCK-BMAL1 heterodimer in a CRY1/CRY2 independent manner. Increased repression of the heterodimer is seen in the presence of NFKB2/p52. Is required for both T and B lymphocyte maturation and function. The polypeptide is Transcription factor RelB (Relb) (Mus musculus (Mouse)).